Here is a 224-residue protein sequence, read N- to C-terminus: Pyridoxine/pyridoxamine 5'-phosphate oxidase (224 aa).

Substrate is bound by residues 14-17 (REHY) and K76. Residues 71–76 (RTVLMK), 86–87 (YT), R92, K93, and Q115 each bind FMN. Substrate contacts are provided by Y133, R137, and S141. Residues 150-151 (QS) and W196 each bind FMN. Substrate is bound at residue 202–204 (RLH). R206 is a binding site for FMN.

Belongs to the pyridoxamine 5'-phosphate oxidase family. Homodimer. It depends on FMN as a cofactor.

It carries out the reaction pyridoxamine 5'-phosphate + O2 + H2O = pyridoxal 5'-phosphate + H2O2 + NH4(+). The catalysed reaction is pyridoxine 5'-phosphate + O2 = pyridoxal 5'-phosphate + H2O2. It participates in cofactor metabolism; pyridoxal 5'-phosphate salvage; pyridoxal 5'-phosphate from pyridoxamine 5'-phosphate: step 1/1. The protein operates within cofactor metabolism; pyridoxal 5'-phosphate salvage; pyridoxal 5'-phosphate from pyridoxine 5'-phosphate: step 1/1. Functionally, catalyzes the oxidation of either pyridoxine 5'-phosphate (PNP) or pyridoxamine 5'-phosphate (PMP) into pyridoxal 5'-phosphate (PLP). This Streptomyces avermitilis (strain ATCC 31267 / DSM 46492 / JCM 5070 / NBRC 14893 / NCIMB 12804 / NRRL 8165 / MA-4680) protein is Pyridoxine/pyridoxamine 5'-phosphate oxidase.